The following is a 405-amino-acid chain: Argininosuccinate synthase (405 aa).

Residues Ala-10 to Ser-18 and Ala-37 contribute to the ATP site. Tyr-90 and Ser-95 together coordinate L-citrulline. Position 120 (Gly-120) interacts with ATP. Residues Thr-122, Asn-126, and Asp-127 each contribute to the L-aspartate site. An L-citrulline-binding site is contributed by Asn-126. Residues Arg-130, Ser-181, Ser-190, Glu-266, and Tyr-278 each coordinate L-citrulline.

It belongs to the argininosuccinate synthase family. Type 1 subfamily. As to quaternary structure, homotetramer.

It localises to the cytoplasm. The catalysed reaction is L-citrulline + L-aspartate + ATP = 2-(N(omega)-L-arginino)succinate + AMP + diphosphate + H(+). The protein operates within amino-acid biosynthesis; L-arginine biosynthesis; L-arginine from L-ornithine and carbamoyl phosphate: step 2/3. This is Argininosuccinate synthase from Rhizorhabdus wittichii (strain DSM 6014 / CCUG 31198 / JCM 15750 / NBRC 105917 / EY 4224 / RW1) (Sphingomonas wittichii).